The primary structure comprises 1260 residues: uncharacterized protein (1260 aa).

The protein belongs to the oxoprolinase family.

This is an uncharacterized protein from Schizosaccharomyces pombe (strain 972 / ATCC 24843) (Fission yeast).